Consider the following 86-residue polypeptide: Large ribosomal subunit protein bL27 (86 aa).

The interval M1–G22 is disordered.

Belongs to the bacterial ribosomal protein bL27 family.

This chain is Large ribosomal subunit protein bL27, found in Vibrio cholerae serotype O1 (strain ATCC 39315 / El Tor Inaba N16961).